The chain runs to 192 residues: Holliday junction branch migration complex subunit RuvA (192 aa).

The segment at 1–64 is domain I; it reads MIGRLTGILA…EDGHYLYGFL (64 aa). The tract at residues 65-143 is domain II; that stretch reads TEAERFAFRQ…DATGVSLHPA (79 aa). The flexible linker stretch occupies residues 144-149; sequence VDDSKQ. The segment at 149–192 is domain III; it reads QDISNALLALGYNEKEAASAMKQLPADVSTSDGIRAALKLLSKV.

The protein belongs to the RuvA family. As to quaternary structure, homotetramer. Forms an RuvA(8)-RuvB(12)-Holliday junction (HJ) complex. HJ DNA is sandwiched between 2 RuvA tetramers; dsDNA enters through RuvA and exits via RuvB. An RuvB hexamer assembles on each DNA strand where it exits the tetramer. Each RuvB hexamer is contacted by two RuvA subunits (via domain III) on 2 adjacent RuvB subunits; this complex drives branch migration. In the full resolvosome a probable DNA-RuvA(4)-RuvB(12)-RuvC(2) complex forms which resolves the HJ.

It localises to the cytoplasm. The RuvA-RuvB-RuvC complex processes Holliday junction (HJ) DNA during genetic recombination and DNA repair, while the RuvA-RuvB complex plays an important role in the rescue of blocked DNA replication forks via replication fork reversal (RFR). RuvA specifically binds to HJ cruciform DNA, conferring on it an open structure. The RuvB hexamer acts as an ATP-dependent pump, pulling dsDNA into and through the RuvAB complex. HJ branch migration allows RuvC to scan DNA until it finds its consensus sequence, where it cleaves and resolves the cruciform DNA. This chain is Holliday junction branch migration complex subunit RuvA, found in Dechloromonas aromatica (strain RCB).